A 1963-amino-acid polypeptide reads, in one-letter code: Myosin-4 (1963 aa).

Positions 28-77 (DSKKNVWIPDPEEGYLAGEITATKGDQVTIVTARGNEVTLKKELVQEMNP) constitute a Myosin N-terminal SH3-like domain. In terms of domain architecture, Myosin motor spans 81–787 (EKTEDMSNLS…VLAHLEDIRD (707 aa)). Lysine 125 carries the post-translational modification N6,N6,N6-trimethyllysine. 174–181 (GESGAGKT) serves as a coordination point for ATP. Actin-binding stretches follow at residues 662–684 (LNNLMTMLNKTHPHFIRCIIPNE) and 766–780 (RIGLTKVFFKAGVLA). Positions 848–1161 (MLKAGKEAEE…LEELGEKLDE (314 aa)) are alpha-helical tailpiece (S2). Positions 848–1963 (MLKAGKEAEE…SPSRARASDF (1116 aa)) form a coiled coil. Composition is skewed to basic and acidic residues over residues 970–988 (LRKAESEKQSKDHQIRSLQ) and 1133–1146 (NERQSRSKADRAKS). 2 disordered regions span residues 970-990 (LRKAESEKQSKDHQIRSLQDE) and 1125-1146 (SELEEELENERQSRSKADRAKS). Residues 1162–1173 (QGGATAAQVEVN) are hinge. The interval 1162–1963 (QGGATAAQVE…SPSRARASDF (802 aa)) is light meromyosin (LMM). Disordered stretches follow at residues 1317 to 1336 (LTSQLEEARRTADEEARERQ) and 1912 to 1963 (LEDA…ASDF). Over residues 1322 to 1336 (EEARRTADEEARERQ) the composition is skewed to basic and acidic residues.

Belongs to the TRAFAC class myosin-kinesin ATPase superfamily. Myosin family. Muscle myosin is a hexameric protein that consists of 2 heavy chain subunits (MHC), 2 alkali light chain subunits (MLC) and 2 regulatory light chain subunits (MLC-2). Forms a complex composed of chaperone unc-45, unc-54 and ubiquitin-protein ligase ufd-2; promotes poly-ubiquitination of unfolded unc-54. Within the complex interacts with unc-45 (via UCS domain) and ufd-2. Interacts with itr-1 (via c-terminal coiled coil domain). Unfolded unc-54 is poly-ubiquitinated by ufd-2.

It is found in the cytoplasm. The protein localises to the myofibril. Functionally, required for muscle contraction. This Caenorhabditis elegans protein is Myosin-4 (unc-54).